The chain runs to 275 residues: Pyridoxal phosphate homeostasis protein (275 aa).

Position 6 is a phosphoserine (serine 6). N6-(pyridoxal phosphate)lysine is present on lysine 47. Position 69 is a phosphotyrosine (tyrosine 69). N6-succinyllysine is present on lysine 125. Residues serine 226 and serine 244 each carry the phosphoserine modification. Over residues 251-263 the composition is skewed to basic and acidic residues; it reads DYSKKPTPDKCAA. The disordered stretch occupies residues 251 to 275; sequence DYSKKPTPDKCAADVKAPLEVAQEH.

The protein belongs to the pyridoxal phosphate-binding protein YggS/PROSC family. In terms of tissue distribution, ubiquitous.

In terms of biological role, pyridoxal 5'-phosphate (PLP)-binding protein, which may be involved in intracellular homeostatic regulation of pyridoxal 5'-phosphate (PLP), the active form of vitamin B6. This chain is Pyridoxal phosphate homeostasis protein, found in Homo sapiens (Human).